A 321-amino-acid chain; its full sequence is Ribose-phosphate pyrophosphokinase 2 (321 aa).

Mg(2+) is bound by residues D130, H132, and D145. S172 is subject to Phosphoserine.

Belongs to the ribose-phosphate pyrophosphokinase family.

The protein resides in the cytoplasm. The enzyme catalyses D-ribose 5-phosphate + ATP = 5-phospho-alpha-D-ribose 1-diphosphate + AMP + H(+). It participates in metabolic intermediate biosynthesis; 5-phospho-alpha-D-ribose 1-diphosphate biosynthesis; 5-phospho-alpha-D-ribose 1-diphosphate from D-ribose 5-phosphate (route I): step 1/1. In terms of biological role, 5-phosphoribose 1-diphosphate synthase involved in nucleotide, histidine, and tryptophan biosynthesis. Active in heteromultimeric complexes with other 5-phosphoribose 1-diphosphate synthases. The protein is Ribose-phosphate pyrophosphokinase 2 of Schizosaccharomyces pombe (strain 972 / ATCC 24843) (Fission yeast).